Reading from the N-terminus, the 105-residue chain is Small ribosomal subunit protein eS10A (105 aa).

It belongs to the eukaryotic ribosomal protein eS10 family. Component of the small ribosomal subunit (SSU). Mature yeast ribosomes consist of a small (40S) and a large (60S) subunit. The 40S small subunit contains 1 molecule of ribosomal RNA (18S rRNA) and 33 different proteins (encoded by 57 genes). The large 60S subunit contains 3 rRNA molecules (25S, 5.8S and 5S rRNA) and 46 different proteins (encoded by 81 genes). eS10 interacts with GCN1 (via middle region); this interaction is direct and promotes GCN2 kinase activity. In terms of processing, the N-terminus is not modified.

The protein resides in the cytoplasm. Functionally, component of the ribosome, a large ribonucleoprotein complex responsible for the synthesis of proteins in the cell. The small ribosomal subunit (SSU) binds messenger RNAs (mRNAs) and translates the encoded message by selecting cognate aminoacyl-transfer RNA (tRNA) molecules. The large subunit (LSU) contains the ribosomal catalytic site termed the peptidyl transferase center (PTC), which catalyzes the formation of peptide bonds, thereby polymerizing the amino acids delivered by tRNAs into a polypeptide chain. The nascent polypeptides leave the ribosome through a tunnel in the LSU and interact with protein factors that function in enzymatic processing, targeting, and the membrane insertion of nascent chains at the exit of the ribosomal tunnel. eS10 plays a role as a positive regulator of the GCN2 kinase activity by stimulating GCN1-mediated GCN2 activation. The polypeptide is Small ribosomal subunit protein eS10A (Saccharomyces cerevisiae (strain ATCC 204508 / S288c) (Baker's yeast)).